Here is a 125-residue protein sequence, read N- to C-terminus: MVTLTDAAVNTLELAVTGEVRRRRGRLRIAVADGGCAGHKYQMGLEATAGDDVLTFGPVTIFVDPTSQPFLTGVVVDFVEGVEGAGFKFDNPNATGSCGCGKSFSAGPGGSCSSAPAPGGCGTAH.

The protein belongs to the HesB/IscA family.

This is an uncharacterized protein from Azospirillum brasilense.